We begin with the raw amino-acid sequence, 321 residues long: Ribosomal RNA small subunit methyltransferase H (321 aa).

S-adenosyl-L-methionine contacts are provided by residues 34–36, D54, F80, D102, and Q109; that span reads GGH.

The protein belongs to the methyltransferase superfamily. RsmH family.

It localises to the cytoplasm. The enzyme catalyses cytidine(1402) in 16S rRNA + S-adenosyl-L-methionine = N(4)-methylcytidine(1402) in 16S rRNA + S-adenosyl-L-homocysteine + H(+). Functionally, specifically methylates the N4 position of cytidine in position 1402 (C1402) of 16S rRNA. This Blochmanniella floridana protein is Ribosomal RNA small subunit methyltransferase H.